A 376-amino-acid chain; its full sequence is Branched-chain-amino-acid aminotransferase, cytosolic (376 aa).

Residue Lys-202 is modified to N6-(pyridoxal phosphate)lysine.

This sequence belongs to the class-IV pyridoxal-phosphate-dependent aminotransferase family. The cofactor is pyridoxal 5'-phosphate.

It localises to the cytoplasm. The enzyme catalyses L-leucine + 2-oxoglutarate = 4-methyl-2-oxopentanoate + L-glutamate. The catalysed reaction is L-isoleucine + 2-oxoglutarate = (S)-3-methyl-2-oxopentanoate + L-glutamate. It carries out the reaction L-valine + 2-oxoglutarate = 3-methyl-2-oxobutanoate + L-glutamate. It catalyses the reaction a 2-oxocarboxylate + L-methionine = 4-methylsulfanyl-2-oxobutanoate + an L-alpha-amino acid. The protein operates within amino-acid biosynthesis; L-isoleucine biosynthesis; L-isoleucine from 2-oxobutanoate: step 4/4. Its pathway is amino-acid biosynthesis; L-leucine biosynthesis; L-leucine from 3-methyl-2-oxobutanoate: step 4/4. It functions in the pathway amino-acid biosynthesis; L-valine biosynthesis; L-valine from pyruvate: step 4/4. It participates in amino-acid biosynthesis; L-methionine biosynthesis via salvage pathway; L-methionine from S-methyl-5-thio-alpha-D-ribose 1-phosphate: step 6/6. Its function is as follows. Cytoplasmic isozyme of branched-chain-amino-acid aminotransferase, which catalyzes the first reaction in the catabolism of the essential branched chain amino acids (BCAAs) leucine, isoleucine, and valine. Catalyzes the formation of methionine from 2-keto-4-methylthiobutyrate (KMTB) in the methionine salvage pathway primarily using BCAAs (leucine, isoleucine, and valine) as well as lysine and proline as the amino donors. Involved in cell cycle regulation. The chain is Branched-chain-amino-acid aminotransferase, cytosolic from Saccharomyces cerevisiae (strain ATCC 204508 / S288c) (Baker's yeast).